Reading from the N-terminus, the 378-residue chain is Erythronate-4-phosphate dehydrogenase (378 aa).

Substrate is bound by residues serine 45 and threonine 66. Residues aspartate 146 and threonine 175 each coordinate NAD(+). Residue arginine 208 is part of the active site. Aspartate 232 serves as a coordination point for NAD(+). The active site involves glutamate 237. Histidine 254 functions as the Proton donor in the catalytic mechanism. Glycine 257 is a binding site for NAD(+). Tyrosine 258 contacts substrate.

Belongs to the D-isomer specific 2-hydroxyacid dehydrogenase family. PdxB subfamily. In terms of assembly, homodimer.

It localises to the cytoplasm. The enzyme catalyses 4-phospho-D-erythronate + NAD(+) = (R)-3-hydroxy-2-oxo-4-phosphooxybutanoate + NADH + H(+). It functions in the pathway cofactor biosynthesis; pyridoxine 5'-phosphate biosynthesis; pyridoxine 5'-phosphate from D-erythrose 4-phosphate: step 2/5. Functionally, catalyzes the oxidation of erythronate-4-phosphate to 3-hydroxy-2-oxo-4-phosphonooxybutanoate. This is Erythronate-4-phosphate dehydrogenase from Pectobacterium atrosepticum (strain SCRI 1043 / ATCC BAA-672) (Erwinia carotovora subsp. atroseptica).